The primary structure comprises 348 residues: uncharacterized protein (348 aa).

6 WD repeats span residues 59 to 98 (GFQG…VVYS), 142 to 182 (GHTD…LIQT), 185 to 226 (DNLG…LLGT), 229 to 267 (QQPG…ELFS), 270 to 309 (GPSL…QVTT), and 312 to 347 (GHQG…SALA).

This is an uncharacterized protein from Synechocystis sp. (strain ATCC 27184 / PCC 6803 / Kazusa).